Here is a 286-residue protein sequence, read N- to C-terminus: 33 kDa chaperonin (286 aa).

Cystine bridges form between Cys225/Cys227 and Cys258/Cys261.

This sequence belongs to the HSP33 family. Under oxidizing conditions two disulfide bonds are formed involving the reactive cysteines. Under reducing conditions zinc is bound to the reactive cysteines and the protein is inactive.

It localises to the cytoplasm. Redox regulated molecular chaperone. Protects both thermally unfolding and oxidatively damaged proteins from irreversible aggregation. Plays an important role in the bacterial defense system toward oxidative stress. The protein is 33 kDa chaperonin of Shewanella oneidensis (strain ATCC 700550 / JCM 31522 / CIP 106686 / LMG 19005 / NCIMB 14063 / MR-1).